The sequence spans 176 residues: Late embryogenesis abundant protein 49 (176 aa).

SMP domains follow at residues Thr49 to Lys106 and Asn115 to His171.

Belongs to the LEA type SMP family.

The protein resides in the cytoplasm. The protein localises to the nucleus. LEA proteins are late embryonic proteins abundant in higher plant seed embryos. The function of those proteins is not known. In Arabidopsis thaliana (Mouse-ear cress), this protein is Late embryogenesis abundant protein 49.